The chain runs to 676 residues: Putative Xaa-Pro dipeptidyl-peptidase (676 aa).

Catalysis depends on charge relay system residues serine 224, aspartate 330, and histidine 361. The disordered stretch occupies residues 423 to 450; it reads RPGTGTQAGVGTLGLRTGSGTETFTDDP.

This sequence belongs to the peptidase S15 family.

The catalysed reaction is Hydrolyzes Xaa-Pro-|- bonds to release unblocked, N-terminal dipeptides from substrates including Ala-Pro-|-p-nitroanilide and (sequentially) Tyr-Pro-|-Phe-Pro-|-Gly-Pro-|-Ile.. The polypeptide is Putative Xaa-Pro dipeptidyl-peptidase (Streptomyces avermitilis (strain ATCC 31267 / DSM 46492 / JCM 5070 / NBRC 14893 / NCIMB 12804 / NRRL 8165 / MA-4680)).